A 21-amino-acid polypeptide reads, in one-letter code: 40 kDa major outer membrane protein (21 aa).

In terms of assembly, disulfide bond interactions within and between MOMP molecules and other components form high molecular-weight oligomers.

The protein localises to the cell outer membrane. In terms of biological role, structural rigidity of the outer membrane of elementary bodies and porin forming, permitting diffusion of solutes through the intracellular reticulate body membrane. This is 40 kDa major outer membrane protein from Actinobacillus pleuropneumoniae (Haemophilus pleuropneumoniae).